A 698-amino-acid polypeptide reads, in one-letter code: Colicin V secretion/processing ATP-binding protein CvaB (698 aa).

Residues 26–145 (QTETAECGLA…RYFTGVALEV (120 aa)) form the Peptidase C39 domain. The active site involves cysteine 32. 7 helical membrane-spanning segments follow: residues 33-53 (GLAC…LIYL), 92-112 (VLKT…LVSV), 176-196 (LAKI…MPVG), 211-231 (GLLT…AATS), 289-311 (TSVI…MLLY), 315-334 (LTWI…LVTY), and 412-432 (IVIL…IGMF). The region spanning 176-458 (LAKIFCLSVV…LTSFLLQLRI (283 aa)) is the ABC transmembrane type-1 domain. One can recognise an ABC transporter domain in the interval 492–698 (LETNGLSYRY…LRTVDRVISI (207 aa)). ATP is bound at residue 526–533 (GASGAGKT).

This sequence belongs to the ABC transporter superfamily. Colicin V exporter (TC 3.A.1.110.2) family.

It is found in the cell membrane. Functionally, involved, in conjunction with CvaA, in the secretion of colicin V. The protein is Colicin V secretion/processing ATP-binding protein CvaB (cvaB) of Escherichia coli.